We begin with the raw amino-acid sequence, 268 residues long: Tryptophan synthase alpha chain (268 aa).

Catalysis depends on proton acceptor residues glutamate 49 and aspartate 60.

The protein belongs to the TrpA family. As to quaternary structure, tetramer of two alpha and two beta chains.

The catalysed reaction is (1S,2R)-1-C-(indol-3-yl)glycerol 3-phosphate + L-serine = D-glyceraldehyde 3-phosphate + L-tryptophan + H2O. Its pathway is amino-acid biosynthesis; L-tryptophan biosynthesis; L-tryptophan from chorismate: step 5/5. Its function is as follows. The alpha subunit is responsible for the aldol cleavage of indoleglycerol phosphate to indole and glyceraldehyde 3-phosphate. The polypeptide is Tryptophan synthase alpha chain (Vibrio vulnificus (strain CMCP6)).